The sequence spans 525 residues: ALBINO3-like protein 2, chloroplastic (525 aa).

4 helical membrane-spanning segments follow: residues 99 to 119 (WMII…LLIL), 167 to 187 (LWFF…MASI), 217 to 237 (FGPV…QISF), and 262 to 282 (ILSV…LVYW). TPR repeat units lie at residues 346–379 (PEEL…DPGY), 380–413 (VRGL…LLDE), 425–458 (MLAS…REPG), and 467–500 (FEAL…NPAY).

It belongs to the OXA1/ALB3/YidC (TC 2.A.9.2) family.

The protein resides in the plastid. It is found in the chloroplast thylakoid membrane. Functionally, probably required for the insertion of integral membrane proteins into the chloroplast thylakoid membranes. This chain is ALBINO3-like protein 2, chloroplastic (ALB3L2), found in Arabidopsis thaliana (Mouse-ear cress).